A 162-amino-acid polypeptide reads, in one-letter code: Caveolin-2 (162 aa).

Topologically, residues 1-86 (MGLETEKADV…FEISKYVLYK (86 aa)) are cytoplasmic. A Phosphotyrosine; by SRC modification is found at Tyr-19. Phosphoserine is present on residues Ser-20 and Ser-23. Residues 87–107 (FLTVFLAIPLAFAAGVLFAVL) constitute an intramembrane region (helical). Topologically, residues 108–162 (SCLHIWILMPFVKTCLMVLPSVQTIWRSVTDVVIAPLCASIGRSFSSVGLQLSHD) are cytoplasmic.

It belongs to the caveolin family. As to quaternary structure, monomer or homodimer. Interacts with CAV1; the interaction forms a stable heterooligomeric complex that is required for targeting to lipid rafts and for caveolae formation. Tyrosine phosphorylated forms do not form heterooligomers with the Tyr-19-phosphorylated form existing as a monomer or dimer. Interacts (tyrosine phosphorylated form) with the SH2 domain-containing proteins, RASA1, NCK1 and SRC. Interacts (tyrosine phosphorylated form) with INSR. Interacts (Tyr-19 phosphorylated form) with MAPK1 (phosphorylated form); the interaction, promoted by insulin, leads to nuclear location and MAPK1 activation. Interacts with STAT3; the interaction is increased on insulin-induced tyrosine phosphorylation leading to STAT activation. Phosphorylated on serine and tyrosine residues. CAV1 promotes phosphorylation on Ser-23 which then targets the complex to the plasma membrane, lipid rafts and caveolae. Phosphorylation on Tyr-19 is required for insulin-induced phosphorylation of MAPK1 and DNA binding of STAT3. Tyrosine phosphorylation is induced by both EGF and insulin.

It is found in the nucleus. Its subcellular location is the cytoplasm. It localises to the golgi apparatus membrane. The protein localises to the cell membrane. The protein resides in the membrane. It is found in the caveola. Functionally, may act as a scaffolding protein within caveolar membranes. Interacts directly with G-protein alpha subunits and can functionally regulate their activity. Acts as an accessory protein in conjunction with CAV1 in targeting to lipid rafts and driving caveolae formation. Positive regulator of cellular mitogenesis of the MAPK signaling pathway. Required for the insulin-stimulated nuclear translocation and activation of MAPK1 and STAT3, and the subsequent regulation of cell cycle progression. In Oryctolagus cuniculus (Rabbit), this protein is Caveolin-2 (CAV2).